Here is a 579-residue protein sequence, read N- to C-terminus: ERV-BabFcenv provirus ancestral Env polyprotein (579 aa).

The signal sequence occupies residues 1–22 (MISAVLNLPSTPLLPLLWFTLI). The interval 23 to 387 (IPASLTNPKF…LSSSNNIQKQ (365 aa)) is surface protein. Over 23-523 (IPASLTNPKF…VWLLPVVQQM (501 aa)) the chain is Extracellular. 4 N-linked (GlcNAc...) asparagine glycosylation sites follow: Asn135, Asn203, Asn242, and Asn251. Residues 255–258 (CFLC) carry the CXXC motif. 3 N-linked (GlcNAc...) asparagine glycosylation sites follow: Asn276, Asn312, and Asn337. Residues 388–408 (AVFLPLIIGVSLASSLVASGL) form a fusion peptide region. The interval 388-579 (AVFLPLIIGV…LPTSDPNYAP (192 aa)) is transmembrane protein. The short motif at 453–469 (AQNRRALDLLTAEKGGT) is the CKS-17 element. A disulfide bridge links Cys470 with Cys477. A CX6CC motif is present at residues 470–478 (CLFLGEECC). The N-linked (GlcNAc...) asparagine glycan is linked to Asn482. A helical membrane pass occupies residues 524–544 (LPFLIPILILCLMLCLAPILI). Residues 545–579 (KFLRARVQEITRVTFNQMLLHPYTQLPTSDPNYAP) lie on the Cytoplasmic side of the membrane.

Belongs to the gamma type-C retroviral envelope protein family. HERV class-I F(c)1 env subfamily. In terms of processing, specific enzymatic cleavages in vivo yield the mature SU and TM proteins. The CXXC motif is highly conserved across a broad range of retroviral envelope proteins. It is thought to participate in the formation of a labile disulfide bond possibly with the CX6CC motif present in the transmembrane domain.

It localises to the cell membrane. In terms of biological role, retroviral envelope proteins mediate receptor recognition and membrane fusion during early infection. Endogenous envelope proteins may have kept, lost or modified their original function during evolution. The chain is ERV-BabFcenv provirus ancestral Env polyprotein from Papio anubis (Olive baboon).